Here is a 302-residue protein sequence, read N- to C-terminus: Oligopeptide transport system permease protein OppC (302 aa).

At 1-39 (MMLSKKNSETLENFSEKLEVEGRSLWQDARRRFMHNRAA) the chain is on the cytoplasmic side. Residues 40-62 (VASLIVLFLIALFVTVAPMLSQF) form a helical membrane-spanning segment. Topologically, residues 63 to 102 (TYFDTDWGMMSSAPDMASGHYFGTDSSGRDLLVRVAIGGR) are periplasmic. The ABC transmembrane type-1 domain maps to 101 to 290 (GRISLMVGIA…VTLFCFNFIG (190 aa)). A helical transmembrane segment spans residues 103–125 (ISLMVGIAAALVAVIVGTLYGSL). The Cytoplasmic portion of the chain corresponds to 126–137 (SGYLGGKIDSVM). Residues 138 to 160 (MRLLEILNSFPFMFFVILLVTFF) traverse the membrane as a helical segment. Residues 161–163 (GQN) lie on the Periplasmic side of the membrane. The helical transmembrane segment at 164–183 (ILLIFVAIGMVSWLDMARIV) threads the bilayer. At 184-213 (RGQTLSLKRKEFIEAAQVGGVSTASIVIRH) the chain is on the cytoplasmic side. A helical membrane pass occupies residues 214–236 (IVPNVLGVVVVYASLLVPSMILF). Topologically, residues 237 to 267 (ESFLSFLGLGTQEPLSSWGALLSDGANSMEV) are periplasmic. A helical transmembrane segment spans residues 268–290 (SPWLLLFPAGFLVVTLFCFNFIG). Over 291–302 (DGLRDALDPKDR) the chain is Cytoplasmic.

This sequence belongs to the binding-protein-dependent transport system permease family. OppBC subfamily. The complex is composed of two ATP-binding proteins (OppD and OppF), two transmembrane proteins (OppB and OppC) and a solute-binding protein (OppA).

It localises to the cell inner membrane. Its function is as follows. Part of the ABC transporter complex OppABCDF involved in the uptake of oligopeptides, including the cell wall murein tripeptide L-alanyl-gamma-D-glutamyl-meso-diaminopimelate. Responsible for the translocation of the substrate across the membrane. Plays an important nutritional role and is involved in the recycling of cell wall peptides. The sequence is that of Oligopeptide transport system permease protein OppC from Salmonella typhimurium (strain LT2 / SGSC1412 / ATCC 700720).